Consider the following 383-residue polypeptide: Carbamoyl phosphate synthase small chain (383 aa).

Residues 1-190 (MPHPSSRQAH…FDQRLKQHPD (190 aa)) form a CPSase region. The L-glutamine site is built by serine 51, glycine 242, and glycine 244. The 188-residue stretch at 194 to 381 (RVVAIDFGIK…VALMADRRDV (188 aa)) folds into the Glutamine amidotransferase type-1 domain. Catalysis depends on cysteine 271, which acts as the Nucleophile. L-glutamine-binding residues include leucine 272, glutamine 275, asparagine 311, glycine 313, and phenylalanine 314. Catalysis depends on residues histidine 354 and glutamate 356.

Belongs to the CarA family. Composed of two chains; the small (or glutamine) chain promotes the hydrolysis of glutamine to ammonia, which is used by the large (or ammonia) chain to synthesize carbamoyl phosphate. Tetramer of heterodimers (alpha,beta)4.

The enzyme catalyses hydrogencarbonate + L-glutamine + 2 ATP + H2O = carbamoyl phosphate + L-glutamate + 2 ADP + phosphate + 2 H(+). It carries out the reaction L-glutamine + H2O = L-glutamate + NH4(+). The protein operates within amino-acid biosynthesis; L-arginine biosynthesis; carbamoyl phosphate from bicarbonate: step 1/1. Its pathway is pyrimidine metabolism; UMP biosynthesis via de novo pathway; (S)-dihydroorotate from bicarbonate: step 1/3. In terms of biological role, small subunit of the glutamine-dependent carbamoyl phosphate synthetase (CPSase). CPSase catalyzes the formation of carbamoyl phosphate from the ammonia moiety of glutamine, carbonate, and phosphate donated by ATP, constituting the first step of 2 biosynthetic pathways, one leading to arginine and/or urea and the other to pyrimidine nucleotides. The small subunit (glutamine amidotransferase) binds and cleaves glutamine to supply the large subunit with the substrate ammonia. The chain is Carbamoyl phosphate synthase small chain from Parasynechococcus marenigrum (strain WH8102).